The sequence spans 277 residues: Pantothenate synthetase (277 aa).

26 to 33 is a binding site for ATP; sequence MGNLHAGH. The active-site Proton donor is His33. Gln57 lines the (R)-pantoate pocket. Gln57 serves as a coordination point for beta-alanine. 143 to 146 contributes to the ATP binding site; it reads GEKD. A (R)-pantoate-binding site is contributed by Gln149. ATP is bound by residues Val172 and 180–183; that span reads LSSR.

The protein belongs to the pantothenate synthetase family. Homodimer.

It localises to the cytoplasm. The enzyme catalyses (R)-pantoate + beta-alanine + ATP = (R)-pantothenate + AMP + diphosphate + H(+). Its pathway is cofactor biosynthesis; (R)-pantothenate biosynthesis; (R)-pantothenate from (R)-pantoate and beta-alanine: step 1/1. Functionally, catalyzes the condensation of pantoate with beta-alanine in an ATP-dependent reaction via a pantoyl-adenylate intermediate. This is Pantothenate synthetase from Nitrosomonas europaea (strain ATCC 19718 / CIP 103999 / KCTC 2705 / NBRC 14298).